Reading from the N-terminus, the 426-residue chain is Serine hydroxymethyltransferase (426 aa).

(6S)-5,6,7,8-tetrahydrofolate contacts are provided by residues Leu-118 and 122–124 (GHL). At Lys-227 the chain carries N6-(pyridoxal phosphate)lysine.

The protein belongs to the SHMT family. As to quaternary structure, homodimer. The cofactor is pyridoxal 5'-phosphate.

It is found in the cytoplasm. The enzyme catalyses (6R)-5,10-methylene-5,6,7,8-tetrahydrofolate + glycine + H2O = (6S)-5,6,7,8-tetrahydrofolate + L-serine. It functions in the pathway one-carbon metabolism; tetrahydrofolate interconversion. Its pathway is amino-acid biosynthesis; glycine biosynthesis; glycine from L-serine: step 1/1. Functionally, catalyzes the reversible interconversion of serine and glycine with tetrahydrofolate (THF) serving as the one-carbon carrier. This reaction serves as the major source of one-carbon groups required for the biosynthesis of purines, thymidylate, methionine, and other important biomolecules. Also exhibits THF-independent aldolase activity toward beta-hydroxyamino acids, producing glycine and aldehydes, via a retro-aldol mechanism. The sequence is that of Serine hydroxymethyltransferase from Mycobacterium avium (strain 104).